The sequence spans 127 residues: uncharacterized protein (127 aa).

This is an uncharacterized protein from Rickettsia conorii (strain ATCC VR-613 / Malish 7).